Consider the following 656-residue polypeptide: Replication protein A 70 kDa DNA-binding subunit A (656 aa).

The segment at residues 225–307 (AIKARVTAKG…NHLNNEWEIL (83 aa)) is a DNA-binding region (OB). Residues 516 to 542 (CPNMIGDRQCNKKVTKSTNGNWTCDKC) form a C4-type zinc finger.

Belongs to the replication factor A protein 1 family. In terms of assembly, heterotrimer of RPA1, RPA2 and RPA3 (canonical replication protein A complex). Interacts with RPA2B. Expressed in root tips, roots, shoot apical meristem (SAM), young leaves, flag leaves and ears, and at lower levels in mature leaves.

The protein resides in the nucleus. Component of the replication protein A complex (RPA) required for DNA recombination, repair and replication. The activity of RPA is mediated by single-stranded DNA binding and protein interactions. Plays an essential role in meiotic and somatic DNA repair, but is dispensable for DNA replication and homologous recombination. Is essential for normal progression through meiosis in pollen mother cells. Is involved in repair of double-strand DNA breaks (DSBs) induced by genotoxic stresses. This chain is Replication protein A 70 kDa DNA-binding subunit A (RPA1A), found in Oryza sativa subsp. japonica (Rice).